Reading from the N-terminus, the 317-residue chain is Small ribosomal subunit protein RACK1 (317 aa).

WD repeat units follow at residues 15–55 (GHNG…DNQY), 64–103 (GHSH…TTQR), 106–146 (GHKG…ATLT), 148–188 (HNDW…VNAD), 191–230 (GHTG…TLYT), 232–272 (EAKA…DELK), and 281–317 (AKDP…TPSA).

It belongs to the WD repeat G protein beta family. Ribosomal protein RACK1 subfamily. In terms of assembly, component of the small ribosomal subunit. Mature ribosomes consist of a small (40S) and a large (60S) subunit. The 40S subunit contains about 32 different proteins and 1 molecule of RNA (18S). The 60S subunit contains 45 different proteins and 3 molecules of RNA (25S, 5.8S and 5S).

The protein localises to the cytoplasm. In terms of biological role, component of the ribosome, a large ribonucleoprotein complex responsible for the synthesis of proteins in the cell. The small ribosomal subunit (SSU) binds messenger RNAs (mRNAs) and translates the encoded message by selecting cognate aminoacyl-transfer RNA (tRNA) molecules. The large subunit (LSU) contains the ribosomal catalytic site termed the peptidyl transferase center (PTC), which catalyzes the formation of peptide bonds, thereby polymerizing the amino acids delivered by tRNAs into a polypeptide chain. The nascent polypeptides leave the ribosome through a tunnel in the LSU and interact with protein factors that function in enzymatic processing, targeting, and the membrane insertion of nascent chains at the exit of the ribosomal tunnel. Located at the head of the 40S ribosomal subunit in the vicinity of the mRNA exit channel, it serves as a scaffold protein that can recruit other proteins to the ribosome. Involved in the negative regulation of translation of a specific subset of proteins. Plays a role in morphogenesis and pathogenesis. This chain is Small ribosomal subunit protein RACK1, found in Candida albicans (strain SC5314 / ATCC MYA-2876) (Yeast).